Reading from the N-terminus, the 173-residue chain is Inorganic pyrophosphatase (173 aa).

Residues lysine 28, arginine 42, and tyrosine 54 each coordinate substrate. 3 residues coordinate Mg(2+): aspartate 64, aspartate 69, and aspartate 101. A substrate-binding site is contributed by tyrosine 140.

Belongs to the PPase family. Homohexamer. Mg(2+) serves as cofactor.

The protein resides in the cytoplasm. It catalyses the reaction diphosphate + H2O = 2 phosphate + H(+). Functionally, catalyzes the hydrolysis of inorganic pyrophosphate (PPi) forming two phosphate ions. The protein is Inorganic pyrophosphatase of Helicobacter pylori (strain J99 / ATCC 700824) (Campylobacter pylori J99).